The chain runs to 372 residues: Peptide chain release factor 2 (372 aa).

Glutamine 253 carries the post-translational modification N5-methylglutamine.

Belongs to the prokaryotic/mitochondrial release factor family. In terms of processing, methylated by PrmC. Methylation increases the termination efficiency of RF2.

The protein resides in the cytoplasm. Peptide chain release factor 2 directs the termination of translation in response to the peptide chain termination codons UGA and UAA. This is Peptide chain release factor 2 from Mycolicibacterium gilvum (strain PYR-GCK) (Mycobacterium gilvum (strain PYR-GCK)).